The sequence spans 503 residues: Probable Xaa-Pro aminopeptidase TSTA_094700 (503 aa).

Positions 277, 288, 428, and 467 each coordinate Mn(2+).

Belongs to the peptidase M24B family. Requires Mn(2+) as cofactor.

It catalyses the reaction Release of any N-terminal amino acid, including proline, that is linked to proline, even from a dipeptide or tripeptide.. Catalyzes the removal of a penultimate prolyl residue from the N-termini of peptides. The sequence is that of Probable Xaa-Pro aminopeptidase TSTA_094700 from Talaromyces stipitatus (strain ATCC 10500 / CBS 375.48 / QM 6759 / NRRL 1006) (Penicillium stipitatum).